A 470-amino-acid polypeptide reads, in one-letter code: 6-phospho-beta-galactosidase (470 aa).

Residues Gln19, His116, Asn159, Glu160, and Asn297 each contribute to the D-galactose 6-phosphate site. Glu160 acts as the Proton donor in catalysis. Glu375 acts as the Nucleophile in catalysis. D-galactose 6-phosphate is bound by residues Ser430, Trp431, Lys437, and Tyr439.

This sequence belongs to the glycosyl hydrolase 1 family.

It catalyses the reaction a 6-phospho-beta-D-galactoside + H2O = D-galactose 6-phosphate + an alcohol. It participates in carbohydrate metabolism; lactose degradation; D-galactose 6-phosphate and beta-D-glucose from lactose 6-phosphate: step 1/1. This is 6-phospho-beta-galactosidase from Staphylococcus aureus (strain Mu3 / ATCC 700698).